Reading from the N-terminus, the 329-residue chain is DNA-directed RNA polymerase subunit alpha (329 aa).

The tract at residues 1–235 is alpha N-terminal domain (alpha-NTD); that stretch reads MQGSVTEFLK…EQLDAFVDLR (235 aa). Residues 249-329 are alpha C-terminal domain (alpha-CTD); that stretch reads FDPILLRPVD…NWPPASIAED (81 aa).

It belongs to the RNA polymerase alpha chain family. Homodimer. The RNAP catalytic core consists of 2 alpha, 1 beta, 1 beta' and 1 omega subunit. When a sigma factor is associated with the core the holoenzyme is formed, which can initiate transcription.

The enzyme catalyses RNA(n) + a ribonucleoside 5'-triphosphate = RNA(n+1) + diphosphate. In terms of biological role, DNA-dependent RNA polymerase catalyzes the transcription of DNA into RNA using the four ribonucleoside triphosphates as substrates. The protein is DNA-directed RNA polymerase subunit alpha of Photobacterium profundum (strain SS9).